A 24-amino-acid chain; its full sequence is Cytochrome c oxidase subunit 7A2, mitochondrial (24 aa).

Basic and acidic residues predominate over residues F1–Q13. Residues F1–G24 are disordered. At K10 the chain carries N6-acetyllysine.

The protein belongs to the cytochrome c oxidase VIIa family. As to quaternary structure, component of the cytochrome c oxidase (complex IV, CIV), a multisubunit enzyme composed of 14 subunits. The complex is composed of a catalytic core of 3 subunits MT-CO1, MT-CO2 and MT-CO3, encoded in the mitochondrial DNA, and 11 supernumerary subunits COX4I, COX5A, COX5B, COX6A, COX6B, COX6C, COX7A, COX7B, COX7C, COX8 and NDUFA4, which are encoded in the nuclear genome. The complex exists as a monomer or a dimer and forms supercomplexes (SCs) in the inner mitochondrial membrane with NADH-ubiquinone oxidoreductase (complex I, CI) and ubiquinol-cytochrome c oxidoreductase (cytochrome b-c1 complex, complex III, CIII), resulting in different assemblies (supercomplex SCI(1)III(2)IV(1) and megacomplex MCI(2)III(2)IV(2)). Interacts with PET100.

The protein localises to the mitochondrion inner membrane. It functions in the pathway energy metabolism; oxidative phosphorylation. Functionally, component of the cytochrome c oxidase, the last enzyme in the mitochondrial electron transport chain which drives oxidative phosphorylation. The respiratory chain contains 3 multisubunit complexes succinate dehydrogenase (complex II, CII), ubiquinol-cytochrome c oxidoreductase (cytochrome b-c1 complex, complex III, CIII) and cytochrome c oxidase (complex IV, CIV), that cooperate to transfer electrons derived from NADH and succinate to molecular oxygen, creating an electrochemical gradient over the inner membrane that drives transmembrane transport and the ATP synthase. Cytochrome c oxidase is the component of the respiratory chain that catalyzes the reduction of oxygen to water. Electrons originating from reduced cytochrome c in the intermembrane space (IMS) are transferred via the dinuclear copper A center (CU(A)) of subunit 2 and heme A of subunit 1 to the active site in subunit 1, a binuclear center (BNC) formed by heme A3 and copper B (CU(B)). The BNC reduces molecular oxygen to 2 water molecules using 4 electrons from cytochrome c in the IMS and 4 protons from the mitochondrial matrix. The chain is Cytochrome c oxidase subunit 7A2, mitochondrial (COX7A2) from Ovis aries (Sheep).